The sequence spans 156 residues: Small ribosomal subunit protein bS6 (156 aa).

Residues A95–E156 are disordered. A compositionally biased stretch (basic and acidic residues) spans R117–G126.

This sequence belongs to the bacterial ribosomal protein bS6 family.

In terms of biological role, binds together with bS18 to 16S ribosomal RNA. This is Small ribosomal subunit protein bS6 from Nitrosococcus oceani (strain ATCC 19707 / BCRC 17464 / JCM 30415 / NCIMB 11848 / C-107).